Consider the following 177-residue polypeptide: Glia associated membrane protein glam-1 (177 aa).

The next 3 membrane-spanning stretches (helical) occupy residues 19–39 (PLVV…FWMS), 42–62 (FGMA…LFGA), and 76–96 (VTFA…VVFA).

The protein localises to the membrane. This Caenorhabditis elegans protein is Glia associated membrane protein glam-1.